We begin with the raw amino-acid sequence, 255 residues long: Hydroxyethylthiazole kinase (255 aa).

Substrate is bound at residue Met-38. Arg-114 and Thr-160 together coordinate ATP. Residue Gly-187 participates in substrate binding.

The protein belongs to the Thz kinase family. The cofactor is Mg(2+).

The catalysed reaction is 5-(2-hydroxyethyl)-4-methylthiazole + ATP = 4-methyl-5-(2-phosphooxyethyl)-thiazole + ADP + H(+). The protein operates within cofactor biosynthesis; thiamine diphosphate biosynthesis; 4-methyl-5-(2-phosphoethyl)-thiazole from 5-(2-hydroxyethyl)-4-methylthiazole: step 1/1. Catalyzes the phosphorylation of the hydroxyl group of 4-methyl-5-beta-hydroxyethylthiazole (THZ). This is Hydroxyethylthiazole kinase from Lysinibacillus sphaericus (strain C3-41).